The chain runs to 557 residues: Probable transcription factor sol4 (557 aa).

The interval 26 to 186 (IQYFFEDINW…EREMRRRMFC (161 aa)) is fungal transcription factor domain. The interval 463–490 (SGTQTRSMPSTETLTYNSSSSTSYGDGH) is disordered. Low complexity predominate over residues 472-485 (STETLTYNSSSSTS).

The protein localises to the nucleus. Probable transcription factor that regulates the expression of the gene cluster that mediates the biosynthesis of the phytotoxin solanapyrone, a causal agent of early blight disease of potato and tomato. This is Probable transcription factor sol4 (sol4) from Alternaria solani.